We begin with the raw amino-acid sequence, 354 residues long: tRNA-specific 2-thiouridylase MnmA (354 aa).

ATP-binding positions include 6–13 (LLSGGVDS) and Leu-33. The active-site Nucleophile is Cys-100. Cys-100 and Cys-195 are disulfide-bonded. Gly-123 provides a ligand contact to ATP. The interval 145-147 (KDQ) is interaction with tRNA. The active-site Cysteine persulfide intermediate is the Cys-195.

This sequence belongs to the MnmA/TRMU family.

It is found in the cytoplasm. It catalyses the reaction S-sulfanyl-L-cysteinyl-[protein] + uridine(34) in tRNA + AH2 + ATP = 2-thiouridine(34) in tRNA + L-cysteinyl-[protein] + A + AMP + diphosphate + H(+). Catalyzes the 2-thiolation of uridine at the wobble position (U34) of tRNA, leading to the formation of s(2)U34. The polypeptide is tRNA-specific 2-thiouridylase MnmA (Borrelia recurrentis (strain A1)).